The following is a 276-amino-acid chain: 3' cyclic ADP-D-ribose synthase HopAM1 (276 aa).

A compositionally biased stretch (polar residues) spans 20–38 (VEASQVKSAGTSSTTNIDS). Residues 20–39 (VEASQVKSAGTSSTTNIDSK) form a disordered region. The segment at 165 to 214 (KNGIAHAKKMAFFITPEWLGSDFCKQEFQWLSETKNKDIKSAFVIFKDVD) is TIR domain. Gln-190 is a catalytic residue.

Homodimer.

The protein localises to the host cytoplasm. The protein resides in the host cytosol. The catalysed reaction is NAD(+) = 3'cADPR + nicotinamide + H(+). Functionally, NAD(+) hydrolase (NADase) that cleaves NAD(+) into nicotinamide and 3' cyclic ADP-D-ribose (3'cADPR, v2-cADPR). Upon infiltration of A.thaliana with this bacteria an effector-triggered immunity-like phenotype (ETI-like, cell death with severe chlorosis) is seen, 3'cADPR levels rise while NAD(+) levels remain constant. Plant immune responses are suppressed. Triggers hypersensitive response-like cell death in Nicotiana tabacum cv. Xanthi and N.benthamiana when transiently expressed, depletes NAD(+) in N.benthamiana. Causes cell death upon induction in yeast due to NAD(+) depletion and/or 3'cADPR itself. Transgenic A.thaliana expressing HopAM1 suppresses its plant immune system upon challenge; the plants produce 3'cADPR without significantly depleting NAD(+). In Pseudomonas syringae pv. tomato (strain ATCC BAA-871 / DC3000), this protein is 3' cyclic ADP-D-ribose synthase HopAM1.